Reading from the N-terminus, the 254-residue chain is Proteasome activator complex subunit 3 (254 aa).

N6-acetyllysine occurs at positions 6 and 14. Lys195 bears the N6-acetyllysine; by P300/CBP mark.

In terms of assembly, homoheptamer. Post-translationally, acetylation at the major site Lys-195 is important for oligomerization and ability to degrade its target substrates. Deacetylated by SIRT1.

In terms of biological role, implicated in immunoproteasome assembly and required for efficient antigen processing. The PA28 activator complex enhances the generation of class I binding peptides by altering the cleavage pattern of the proteasome. This Gallus gallus (Chicken) protein is Proteasome activator complex subunit 3.